The following is a 272-amino-acid chain: Ribonuclease HII (272 aa).

The 186-residue stretch at 87–272 (KYVAGVDEVG…HRMSFLKNIL (186 aa)) folds into the RNase H type-2 domain. A divalent metal cation contacts are provided by Asp-93, Glu-94, and Asp-188.

This sequence belongs to the RNase HII family. The cofactor is Mn(2+). It depends on Mg(2+) as a cofactor.

It localises to the cytoplasm. The catalysed reaction is Endonucleolytic cleavage to 5'-phosphomonoester.. Its function is as follows. Endonuclease that specifically degrades the RNA of RNA-DNA hybrids. This chain is Ribonuclease HII, found in Clostridium perfringens (strain ATCC 13124 / DSM 756 / JCM 1290 / NCIMB 6125 / NCTC 8237 / Type A).